The primary structure comprises 113 residues: Large ribosomal subunit protein uL22 (113 aa).

It belongs to the universal ribosomal protein uL22 family. As to quaternary structure, part of the 50S ribosomal subunit.

Its function is as follows. This protein binds specifically to 23S rRNA; its binding is stimulated by other ribosomal proteins, e.g. L4, L17, and L20. It is important during the early stages of 50S assembly. It makes multiple contacts with different domains of the 23S rRNA in the assembled 50S subunit and ribosome. Functionally, the globular domain of the protein is located near the polypeptide exit tunnel on the outside of the subunit, while an extended beta-hairpin is found that lines the wall of the exit tunnel in the center of the 70S ribosome. This is Large ribosomal subunit protein uL22 from Bacillus pumilus (strain SAFR-032).